A 133-amino-acid chain; its full sequence is Osteocrin (133 aa).

A signal peptide spans methionine 1–serine 27. Arginine amide is present on arginine 132.

The protein belongs to the Osteocrin family. In terms of assembly, interacts with NPR3. In terms of tissue distribution, enriched in neocortical regions of the developing cerebral cortex. Not expressed in other compartments of the neocortical wall or in brain regions such as the hippocampus, striatum, mediodorsal nucleus of the thalamus and cerebellum. Also expressed in bone. In developing neonatal rib bone, present at high level in osteoblasts on bone-forming surfaces, in newly incorporated osteocytes and in some late hypertrophic chondrocytes (at protein level). In adult bone, localizes specifically to osteoblasts and young osteocytes at bone-forming sites (at protein level).

The protein localises to the secreted. Functionally, hormone that acts as a regulator of dendritic growth in the developing cerebral cortex in response to sensory experience. Induced in the brain following membrane depolarization and inhibits dendritic branching in neurons of the developing cortex. Probably acts by binding to natriuretic peptide receptor NPR3/NPR-C, thereby preventing binding between NPR3/NPR-C and natriuretic peptides, leading to increase cGMP production. This Homo sapiens (Human) protein is Osteocrin.